Reading from the N-terminus, the 322-residue chain is AA9 family lytic polysaccharide monooxygenase A (322 aa).

Residues 1-15 (MKVLSLLAAASAASA) form the signal peptide. Positions 16 and 96 each coordinate Cu(2+). Cystine bridges form between C54-C182 and C152-C237. O2-binding residues include H168 and Q177. T228 and T236 each carry an O-linked (Man...) threonine glycan. In terms of domain architecture, CBM1 spans 286–322 (CTAAQWAQCGGMGFSGCTTCASPYTCKKMNDYYSQCS).

This sequence belongs to the polysaccharide monooxygenase AA9 family. Cu(2+) is required as a cofactor.

It localises to the secreted. The enzyme catalyses [(1-&gt;4)-beta-D-glucosyl]n+m + reduced acceptor + O2 = 4-dehydro-beta-D-glucosyl-[(1-&gt;4)-beta-D-glucosyl]n-1 + [(1-&gt;4)-beta-D-glucosyl]m + acceptor + H2O.. In terms of biological role, lytic polysaccharide monooxygenase (LPMO) that depolymerizes crystalline and amorphous polysaccharides via the oxidation of scissile alpha- or beta-(1-4)-glycosidic bonds, yielding C4 oxidation products. Catalysis by LPMOs requires the reduction of the active-site copper from Cu(II) to Cu(I) by a reducing agent and H(2)O(2) or O(2) as a cosubstrate. Active on tamarind xyloglucan and konjac glucomannan. The polypeptide is AA9 family lytic polysaccharide monooxygenase A (gh61-1) (Neurospora crassa (strain ATCC 24698 / 74-OR23-1A / CBS 708.71 / DSM 1257 / FGSC 987)).